The following is a 270-amino-acid chain: Acyl-[acyl-carrier-protein]--UDP-N-acetylglucosamine O-acyltransferase (270 aa).

This sequence belongs to the transferase hexapeptide repeat family. LpxA subfamily. Homotrimer.

It localises to the cytoplasm. It catalyses the reaction a (3R)-hydroxyacyl-[ACP] + UDP-N-acetyl-alpha-D-glucosamine = a UDP-3-O-[(3R)-3-hydroxyacyl]-N-acetyl-alpha-D-glucosamine + holo-[ACP]. It participates in glycolipid biosynthesis; lipid IV(A) biosynthesis; lipid IV(A) from (3R)-3-hydroxytetradecanoyl-[acyl-carrier-protein] and UDP-N-acetyl-alpha-D-glucosamine: step 1/6. Functionally, involved in the biosynthesis of lipid A, a phosphorylated glycolipid that anchors the lipopolysaccharide to the outer membrane of the cell. This Helicobacter pylori (strain Shi470) protein is Acyl-[acyl-carrier-protein]--UDP-N-acetylglucosamine O-acyltransferase.